Consider the following 427-residue polypeptide: Enolase (427 aa).

Glutamine 163 provides a ligand contact to (2R)-2-phosphoglycerate. Catalysis depends on glutamate 205, which acts as the Proton donor. 3 residues coordinate Mg(2+): aspartate 242, glutamate 288, and aspartate 315. 4 residues coordinate (2R)-2-phosphoglycerate: lysine 340, arginine 369, serine 370, and lysine 391. Lysine 340 (proton acceptor) is an active-site residue.

The protein belongs to the enolase family. It depends on Mg(2+) as a cofactor.

It localises to the cytoplasm. Its subcellular location is the secreted. The protein localises to the cell surface. The enzyme catalyses (2R)-2-phosphoglycerate = phosphoenolpyruvate + H2O. The protein operates within carbohydrate degradation; glycolysis; pyruvate from D-glyceraldehyde 3-phosphate: step 4/5. Its function is as follows. Catalyzes the reversible conversion of 2-phosphoglycerate (2-PG) into phosphoenolpyruvate (PEP). It is essential for the degradation of carbohydrates via glycolysis. The polypeptide is Enolase (Cytophaga hutchinsonii (strain ATCC 33406 / DSM 1761 / CIP 103989 / NBRC 15051 / NCIMB 9469 / D465)).